The following is a 415-amino-acid chain: Histidine--tRNA ligase (415 aa).

The protein belongs to the class-II aminoacyl-tRNA synthetase family. As to quaternary structure, homodimer.

It localises to the cytoplasm. The catalysed reaction is tRNA(His) + L-histidine + ATP = L-histidyl-tRNA(His) + AMP + diphosphate + H(+). The polypeptide is Histidine--tRNA ligase (Rickettsia bellii (strain RML369-C)).